The following is a 373-amino-acid chain: uncharacterized protein (373 aa).

It belongs to the glycosyltransferase 28 family.

This is an uncharacterized protein from Bacillus subtilis (strain 168).